The primary structure comprises 1707 residues: Kinesin-like protein KIF1A (1707 aa).

In terms of domain architecture, Kinesin motor spans 5–354 (SVKVAVRVRP…LRYADRAKQI (350 aa)). ATP contacts are provided by Gly102, Lys103, Ser104, Tyr105, and Ser215. Ser104 contacts Mg(2+). The stretch at 439 to 466 (SEEAIERLKETEKIIAELNETWEEKLRR) forms a coiled coil. The FHA domain occupies 525–581 (TRVGREDAERRQDIVLSGHFIKEEHCIFRSDSRGGGEAVVTLEPCEGADTYVNGKKV). 2 coiled-coil regions span residues 637–671 (EKQG…LLEQ) and 811–831 (LEKL…AAEV). A required for interaction with CALM1, PPFIA2 and TANC2 region spans residues 657–1105 (QYRREREEAT…LCKDVLSPLR (449 aa)). Disordered regions lie at residues 1424-1462 (PVPE…EVPN) and 1536-1576 (TDVR…EKEP). The segment covering 1429-1453 (LSPASSEDSESRSSSGASSPLSAEG) has biased composition (low complexity). A PH domain is found at 1592-1690 (IVSKKGYLHF…WLYAFNPLLA (99 aa)).

The protein belongs to the TRAFAC class myosin-kinesin ATPase superfamily. Kinesin family. Unc-104 subfamily. Dimeric motor; dimerization is required for ATP-driven processive motility. Monomer in vitro. Interacts with PPFIA1 and PPFIA4. Interacts with CALM1; the interaction is increased in presence of calcium and increases neuronal dense core vesicles motility. Interacts with PPFIA2 and TANC2; both interactions allow the recruitment of neuronal dense core vesicles to dendritic spines and decrease in presence of calcium. Interacts with SYT4 (unphosphorylated) and SYT11; both interactions increase in presence of calcium. Interacts with MADD.

It localises to the cytoplasm. Its subcellular location is the cytoskeleton. The protein localises to the cell projection. The protein resides in the neuron projection. It is found in the axon. It localises to the perinuclear region. Its subcellular location is the synapse. The protein localises to the cytoplasmic vesicle. The protein resides in the secretory vesicle. It is found in the neuronal dense core vesicle membrane. It catalyses the reaction ATP + H2O + a kinesin associated with a microtubule at position (n) = ADP + phosphate a kinesin associated with a microtubule at position (n+1, toward the plus end).. Its function is as follows. Kinesin motor with a plus-end-directed microtubule motor activity, involved in anterograde axonal transport of synaptic vesicle precursors. Also required for neuronal dense core vesicles (DCVs) transport to the dendritic spines and axons. The interaction calcium-dependent with CALM1 increases vesicle motility and interaction with the scaffolding proteins PPFIA2 and TANC2 recruits DCVs to synaptic sites. This chain is Kinesin-like protein KIF1A, found in Rattus norvegicus (Rat).